A 338-amino-acid chain; its full sequence is DNA-directed RNA polymerase subunit alpha (338 aa).

The alpha N-terminal domain (alpha-NTD) stretch occupies residues 1-226 (MLIAQRPTLT…ELFGLTRELN (226 aa)). The segment at 243 to 338 (YAESLGTPVE…DDDYAETEQY (96 aa)) is alpha C-terminal domain (alpha-CTD). Residues 319–338 (AAAEAYDEANDDDYAETEQY) are disordered. Over residues 323–338 (AYDEANDDDYAETEQY) the composition is skewed to acidic residues.

It belongs to the RNA polymerase alpha chain family. As to quaternary structure, homodimer. The RNAP catalytic core consists of 2 alpha, 1 beta, 1 beta' and 1 omega subunit. When a sigma factor is associated with the core the holoenzyme is formed, which can initiate transcription.

It catalyses the reaction RNA(n) + a ribonucleoside 5'-triphosphate = RNA(n+1) + diphosphate. Its function is as follows. DNA-dependent RNA polymerase catalyzes the transcription of DNA into RNA using the four ribonucleoside triphosphates as substrates. The polypeptide is DNA-directed RNA polymerase subunit alpha (Cutibacterium acnes (strain DSM 16379 / KPA171202) (Propionibacterium acnes)).